A 660-amino-acid polypeptide reads, in one-letter code: Elongation factor 4 (660 aa).

One can recognise a tr-type G domain in the interval 55–241; sequence AQIRNFCIIA…EVVRQVPPPQ (187 aa). GTP-binding positions include 67-72 and 188-191; these read DHGKST and NKID.

The protein belongs to the TRAFAC class translation factor GTPase superfamily. Classic translation factor GTPase family. LepA subfamily.

It is found in the cell membrane. The enzyme catalyses GTP + H2O = GDP + phosphate + H(+). Required for accurate and efficient protein synthesis under certain stress conditions. May act as a fidelity factor of the translation reaction, by catalyzing a one-codon backward translocation of tRNAs on improperly translocated ribosomes. Back-translocation proceeds from a post-translocation (POST) complex to a pre-translocation (PRE) complex, thus giving elongation factor G a second chance to translocate the tRNAs correctly. Binds to ribosomes in a GTP-dependent manner. The polypeptide is Elongation factor 4 (Mycolicibacterium paratuberculosis (strain ATCC BAA-968 / K-10) (Mycobacterium paratuberculosis)).